The chain runs to 284 residues: HTH-type transcriptional activator RhaR (284 aa).

The HTH araC/xylS-type domain occupies 181-279 (DMLMNALRAS…GVSPSAYRQR (99 aa)). 2 DNA-binding regions (H-T-H motif) span residues 198–219 (EAFC…KEQT) and 246–269 (IGDI…HQAF).

Binds DNA as a dimer.

It localises to the cytoplasm. Functionally, activates expression of the rhaSR operon in response to L-rhamnose. The sequence is that of HTH-type transcriptional activator RhaR from Pectobacterium carotovorum subsp. carotovorum (strain PC1).